We begin with the raw amino-acid sequence, 878 residues long: Pyruvate, phosphate dikinase (878 aa).

The tract at residues 1–347 (MKKLIYYFGS…LYILQTRTAK (347 aa)) is N-terminal. ATP is bound at residue arginine 96. The interval 348–404 (RTAIAAINIAVQMVEEKLISKEQALMRIDPESLNQLLHTRIDYSKGLTSIAEGLPAS) is linker 1. Positions 405–502 (PGAATGIAVF…VIKQGDIITI (98 aa)) are central. Threonine 457 is subject to Phosphothreonine; by PDRP1. Histidine 459 (tele-phosphohistidine intermediate) is an active-site residue. Residues 503–537 (DGGSGKIFLGEMPLIQPTFSEESKLILDWADEISS) form a linker 2 region. Residues 538 to 878 (LKVRANAETV…AAAQAKIKHG (341 aa)) are C-terminal. Residues arginine 565, arginine 621, glutamate 749, glycine 770, threonine 771, asparagine 772, and aspartate 773 each contribute to the substrate site. Glutamate 749 contacts Mg(2+). Aspartate 773 provides a ligand contact to Mg(2+). Cysteine 835 (proton donor) is an active-site residue.

The protein belongs to the PEP-utilizing enzyme family. As to quaternary structure, homodimer. Mg(2+) is required as a cofactor. Post-translationally, phosphorylation of Thr-457 in the dark inactivates the enzyme. Dephosphorylation upon light stimulation reactivates the enzyme.

It catalyses the reaction pyruvate + phosphate + ATP = phosphoenolpyruvate + AMP + diphosphate + H(+). With respect to regulation, activated by light-induced dephosphorylation. Inhibited by dark-induced phosphorylation. Both reactions are catalyzed by PDRP1. In terms of biological role, catalyzes the reversible phosphorylation of pyruvate and phosphate. The polypeptide is Pyruvate, phosphate dikinase (ppdK) (Rickettsia conorii (strain ATCC VR-613 / Malish 7)).